The primary structure comprises 385 residues: 1-deoxy-D-xylulose 5-phosphate reductoisomerase (385 aa).

Residues threonine 10, glycine 11, serine 12, isoleucine 13, lysine 37, and asparagine 124 each contribute to the NADPH site. Lysine 125 is a binding site for 1-deoxy-D-xylulose 5-phosphate. An NADPH-binding site is contributed by glutamate 126. A Mn(2+)-binding site is contributed by aspartate 150. 1-deoxy-D-xylulose 5-phosphate is bound by residues serine 151, glutamate 152, serine 176, and histidine 199. Glutamate 152 serves as a coordination point for Mn(2+). Residue glycine 205 participates in NADPH binding. Positions 212, 217, 218, and 221 each coordinate 1-deoxy-D-xylulose 5-phosphate. Position 221 (glutamate 221) interacts with Mn(2+).

The protein belongs to the DXR family. The cofactor is Mg(2+). Requires Mn(2+) as cofactor.

The catalysed reaction is 2-C-methyl-D-erythritol 4-phosphate + NADP(+) = 1-deoxy-D-xylulose 5-phosphate + NADPH + H(+). It participates in isoprenoid biosynthesis; isopentenyl diphosphate biosynthesis via DXP pathway; isopentenyl diphosphate from 1-deoxy-D-xylulose 5-phosphate: step 1/6. Its function is as follows. Catalyzes the NADPH-dependent rearrangement and reduction of 1-deoxy-D-xylulose-5-phosphate (DXP) to 2-C-methyl-D-erythritol 4-phosphate (MEP). In Clostridium botulinum (strain Kyoto / Type A2), this protein is 1-deoxy-D-xylulose 5-phosphate reductoisomerase.